A 510-amino-acid polypeptide reads, in one-letter code: MTDAVQNEINQEQIAQEENKLIAERRSKLDHIRKNCKANGHPNSFRRDSLAGDLQKKFGEKSKEELEALNHVVSIAGRVMAKRGPFLVIQETSGRIQAYASKEVQQELKDKYQGLDIGDIIGVQGALHKSGKGDLYVNMEQFQLLTKALRPLPEKFHGLTDQEMRYRQRYVDLIVNENSRNAFIVRSKVMSAIRNFMISKQFMEVETPMMHVIPGGASARPFITHHNALDMPMYLRIAPELYLKRLVVGGFDRVFEINRNFRNEGLSPRHNPEFTMMEFYMAYADYKDLMDLTEELLSSVALEVLGSTSMPYGEHTVEFGGKYARMSMFDAIKHYNPNHAQIQALTEEDIQNRDLMVSIAKSVHVDVEPFWTCGQLLEEIFGETAEPKLMQPTFITGYPADISPLARRSDDNPFFTDRFEFFIGGREVANGFSELNDAEDQDARFKAQVEAKESGDDEAMFYDADYITALEHGLPPTAGQGIGIDRLVMLLTNTHTIRDVILFPAMRPQQ.

Mg(2+) contacts are provided by glutamate 420 and glutamate 427.

This sequence belongs to the class-II aminoacyl-tRNA synthetase family. As to quaternary structure, homodimer. It depends on Mg(2+) as a cofactor.

The protein resides in the cytoplasm. The catalysed reaction is tRNA(Lys) + L-lysine + ATP = L-lysyl-tRNA(Lys) + AMP + diphosphate. In Vibrio cholerae serotype O1 (strain ATCC 39315 / El Tor Inaba N16961), this protein is Lysine--tRNA ligase (lysS).